Reading from the N-terminus, the 858-residue chain is MSASVAAPPPALSRKAEFKAAKAELLARFQTATNVTPLMHALSRATDDALRRLWHECGLPATLALVAVGGFGRGELSPHSDVDILVLLPDAHARELDERIERFIGMAWDLGLEIGSSVRTVDQCIEEASQDVTVQTSLLEARRIVGSTALFERFMLRYREALDARAFFQAKVLEMRQRHAKFQDTPYSLEPNVKESPGGLRDLQTILWIARAAGFGSSWRELDTRGLITDREARELRRNEGFLKTLRARLHVIAGRRQDILVFDLQTQAAESFGYRPTPAKRASEQLMRRYYWAAKAVTQLATILIQNIEAQLFPATSGVTRVLSPGRFVEKQGMLEIAADDVFERHPDAILEAFLLYEATRGVKGLSARTLRALYNSRDVMNNAWRRDPRNRHTFMQILQQPEGITHAFRLMNQTSVLGRYLLNFRRIVGQMQHDLYHVYTVDQHILMVLRNIRRFAVAEHAHEYPFCSQLIVNFERPWVLYVAALFHDIAKGRGGDHSALGMTDARRFCREHGIEGGDAALVVWLVQHHLTMSQVAQKQDTSDPEVIKRFADLVGNERRLTALYLLTVADIRGTSPKVWNTWKGKLLEDLYRATLAVLGGAQPDAHSELKTRQEEALALLRLETVPPDAHRALWDQLDVGYFLRHDAADIAWQTRVLYRHVAADTAIVRARPSPVGDALQVLVYVKDRSDLFAGICAYFDRNGLSVLDARVNTTRHGYALDNFIVTQTERDVQYRDIANLVEQQLAARLAESAPLPEPSKGRLSRLSRTFPITPRVDLRADERGQYYILSVSANDRPGLLYSIARVLAEHRVGVHAARINTLGERVEDVFMLDGTGLSDNRLQIQVETELLRAIAV.

Positions 1–324 (MSASVAAPPP…PATSGVTRVL (324 aa)) are uridylyltransferase. The tract at residues 325-681 (SPGRFVEKQG…ARPSPVGDAL (357 aa)) is uridylyl-removing. Positions 443 to 565 (VDQHILMVLR…VGNERRLTAL (123 aa)) constitute an HD domain. ACT domains are found at residues 682–761 (QVLV…PEPS) and 790–858 (ILSV…AIAV).

The protein belongs to the GlnD family. Mg(2+) is required as a cofactor.

The enzyme catalyses [protein-PII]-L-tyrosine + UTP = [protein-PII]-uridylyl-L-tyrosine + diphosphate. It carries out the reaction [protein-PII]-uridylyl-L-tyrosine + H2O = [protein-PII]-L-tyrosine + UMP + H(+). With respect to regulation, uridylyltransferase (UTase) activity is inhibited by glutamine, while glutamine activates uridylyl-removing (UR) activity. Modifies, by uridylylation and deuridylylation, the PII regulatory proteins (GlnB and homologs), in response to the nitrogen status of the cell that GlnD senses through the glutamine level. Under low glutamine levels, catalyzes the conversion of the PII proteins and UTP to PII-UMP and PPi, while under higher glutamine levels, GlnD hydrolyzes PII-UMP to PII and UMP (deuridylylation). Thus, controls uridylylation state and activity of the PII proteins, and plays an important role in the regulation of nitrogen assimilation and metabolism. In Burkholderia thailandensis (strain ATCC 700388 / DSM 13276 / CCUG 48851 / CIP 106301 / E264), this protein is Bifunctional uridylyltransferase/uridylyl-removing enzyme.